The sequence spans 435 residues: Transmembrane protein 130 (435 aa).

Residues 1–24 form the signal peptide; it reads MAQAVWSRLGRILWLACLLPWAPA. Topologically, residues 25-339 are extracellular; the sequence is GVAAGLYELN…IQVWPSRIQP (315 aa). Residues asparagine 34, asparagine 197, and asparagine 300 are each glycosylated (N-linked (GlcNAc...) asparagine). The PKD domain occupies 147–233; sequence WPSSYLTKTV…AVKQKTGDFS (87 aa). A helical membrane pass occupies residues 340–360; the sequence is AVFAFPCATLITVMLAFIMYM. At 361–435 the chain is on the cytoplasmic side; sequence TLRNATQQKD…LYKSVKTYTV (75 aa).

The protein localises to the golgi apparatus membrane. The polypeptide is Transmembrane protein 130 (TMEM130) (Homo sapiens (Human)).